Here is a 348-residue protein sequence, read N- to C-terminus: Phosphate acyltransferase (348 aa).

The protein belongs to the PlsX family. As to quaternary structure, homodimer. Probably interacts with PlsY.

Its subcellular location is the cytoplasm. It catalyses the reaction a fatty acyl-[ACP] + phosphate = an acyl phosphate + holo-[ACP]. It functions in the pathway lipid metabolism; phospholipid metabolism. In terms of biological role, catalyzes the reversible formation of acyl-phosphate (acyl-PO(4)) from acyl-[acyl-carrier-protein] (acyl-ACP). This enzyme utilizes acyl-ACP as fatty acyl donor, but not acyl-CoA. The chain is Phosphate acyltransferase from Francisella tularensis subsp. novicida (strain U112).